We begin with the raw amino-acid sequence, 188 residues long: Nicotinamide-nucleotide adenylyltransferase (188 aa).

The protein belongs to the archaeal NMN adenylyltransferase family.

It is found in the cytoplasm. It catalyses the reaction beta-nicotinamide D-ribonucleotide + ATP + H(+) = diphosphate + NAD(+). It participates in cofactor biosynthesis; NAD(+) biosynthesis; NAD(+) from nicotinamide D-ribonucleotide: step 1/1. This chain is Nicotinamide-nucleotide adenylyltransferase, found in Pyrococcus furiosus (strain ATCC 43587 / DSM 3638 / JCM 8422 / Vc1).